The following is a 486-amino-acid chain: Membrane-bound lytic murein transglycosylase F (486 aa).

Residues 1 to 21 (MTRIKLSYFTIGLVALLLALA) form the signal peptide. The tract at residues 22–268 (LWPNIPWRNG…RLEEKYLGHV (247 aa)) is non-LT domain. Residues 269–486 (GSFDYVDTKT…VVGPGWSIGD (218 aa)) form an LT domain region. Glutamate 313 is a catalytic residue.

This sequence in the N-terminal section; belongs to the bacterial solute-binding protein 3 family. It in the C-terminal section; belongs to the transglycosylase Slt family.

It localises to the cell outer membrane. The catalysed reaction is Exolytic cleavage of the (1-&gt;4)-beta-glycosidic linkage between N-acetylmuramic acid (MurNAc) and N-acetylglucosamine (GlcNAc) residues in peptidoglycan, from either the reducing or the non-reducing ends of the peptidoglycan chains, with concomitant formation of a 1,6-anhydrobond in the MurNAc residue.. Functionally, murein-degrading enzyme that degrades murein glycan strands and insoluble, high-molecular weight murein sacculi, with the concomitant formation of a 1,6-anhydromuramoyl product. Lytic transglycosylases (LTs) play an integral role in the metabolism of the peptidoglycan (PG) sacculus. Their lytic action creates space within the PG sacculus to allow for its expansion as well as for the insertion of various structures such as secretion systems and flagella. This is Membrane-bound lytic murein transglycosylase F from Yersinia pseudotuberculosis serotype I (strain IP32953).